Reading from the N-terminus, the 271-residue chain is Phosphonoacetaldehyde hydrolase (271 aa).

The Nucleophile role is filled by D12. Mg(2+) contacts are provided by D12 and A14. K54 acts as the Schiff-base intermediate with substrate in catalysis. Residue D188 participates in Mg(2+) binding.

This sequence belongs to the HAD-like hydrolase superfamily. PhnX family. In terms of assembly, homodimer. The cofactor is Mg(2+).

It catalyses the reaction phosphonoacetaldehyde + H2O = acetaldehyde + phosphate + H(+). Its function is as follows. Involved in phosphonate degradation. This is Phosphonoacetaldehyde hydrolase from Vibrio vulnificus (strain CMCP6).